Consider the following 585-residue polypeptide: Mycosin-5 (585 aa).

Positions 1 to 39 are cleaved as a signal peptide; that stretch reads MQRFGTGSSRSWCGRAGTATIAAVLLASGALTGLPPAYA. Residues 83-521 form the Peptidase S8 domain; sequence PKYMEMLNLN…YGVVDPVAAL (439 aa). Residues aspartate 109 and histidine 141 each act as charge relay system in the active site. The span at 163–173 shows a compositional bias: low complexity; sequence VPRRPVTIPTT. The tract at residues 163 to 269 is disordered; sequence VPRRPVTIPT…PALGPPPDAF (107 aa). 2 stretches are compositionally biased toward pro residues: residues 196–224 and 252–267; these read PAPP…PQPP and NPHP…PPPD. Catalysis depends on serine 466, which acts as the Charge relay system. A helical transmembrane segment spans residues 552–572; the sequence is VPIWVAAGGLAGALLIGGAVF.

This sequence belongs to the peptidase S8 family.

It is found in the cell membrane. In Mycobacterium tuberculosis (strain ATCC 25618 / H37Rv), this protein is Mycosin-5.